A 964-amino-acid polypeptide reads, in one-letter code: DNA mismatch repair protein MSH2 (964 aa).

An ATP-binding site is contributed by 688–695; sequence GPNMGGKS. Positions 851-964 are interaction with MSH6; the sequence is DQSFGIHVAE…YLKYIKALLL (114 aa).

It belongs to the DNA mismatch repair MutS family. Heterodimer consisting of MSH2-MSH6 (MutS alpha) or MSH2-MSH3 (MutS beta). Both heterodimers form a ternary complex with MutL alpha (MLH1-PMS1). MutS beta also forms a ternary complex with MutL beta (MLH1-MLH3), and possibly with a MLH1-MLH2 heterodimer. Both heterodimers interact with proliferating cell nuclear antigen (PCNA/POL30). This interaction is disrupted upon binding of the MutS heterodimers to mismatch DNA. Interacts with SAW1.

It is found in the nucleus. With respect to regulation, inhibited by Cd(2+). Component of the post-replicative DNA mismatch repair system (MMR). Forms two different heterodimers: MutS alpha (MSH2-MSH6 heterodimer) and MutS beta (MSH2-MSH3 heterodimer), which bind to DNA mismatches thereby initiating DNA repair. MSH2 seems to act as a scaffold for the other MutS homologs that provide substrate-binding and substrate specificity. When bound, heterodimers bend the DNA helix and shield approximately 20 base pairs. MutS alpha acts mainly to repair base-base and single insertion-deletion mismatches that occur during replication, but can also repair longer insertion-deletion loops (IDLs), although with decreasing efficiency as the size of the extrahelical loop increases. MutS beta acts mainly to repair IDLs from 2 to 13 nucleotides in size, but can also repair base-base and single insertion-deletion mismatches. After mismatch binding, MutS alpha or beta form a ternary complex with a MutL heterodimer, which is thought to be responsible for directing the downstream MMR events, including strand discrimination, excision, and resynthesis. ATP binding and hydrolysis play a pivotal role in mismatch repair functions. Both subunits bind ATP, but with differing affinities, and their ATPase kinetics are also very different. MSH6 binds and hydrolyzes ATP rapidly, whereas MSH2 catalyzes ATP at a substantially slower rate. Binding to a mismatched base pair suppresses MSH6-catalyzed ATP hydrolysis, but not the activity of MSH2. ATP binding to both subunits is necessary to trigger a change in MutS alpha interaction with mismatched DNA, converting MutS alpha into a sliding clamp capable of hydrolysis-independent movement along DNA, and also facilitates formation of ternary complexes containing MutS and MutL proteins and the mismatch. MutS beta also has a role in regulation of heteroduplex formation during mitotic and meiotic recombination. MutS beta binds to DNA flap structures predicted to form during recombination, and is required for 3' non-homologous tail removal (NHTR). MutS beta-binding alters the DNA conformation of its substrate at the ds/ssDNA junction and may facilitate its recognition and/or cleavage by the downstream nucleotide excision repair (NER) RAD1-RAD10 endonuclease. The polypeptide is DNA mismatch repair protein MSH2 (MSH2) (Saccharomyces cerevisiae (strain ATCC 204508 / S288c) (Baker's yeast)).